Reading from the N-terminus, the 135-residue chain is ATP synthase epsilon chain (135 aa).

Belongs to the ATPase epsilon chain family. In terms of assembly, F-type ATPases have 2 components, CF(1) - the catalytic core - and CF(0) - the membrane proton channel. CF(1) has five subunits: alpha(3), beta(3), gamma(1), delta(1), epsilon(1). CF(0) has three main subunits: a, b and c.

The protein localises to the cell inner membrane. Produces ATP from ADP in the presence of a proton gradient across the membrane. In Rhodopseudomonas palustris (strain BisB18), this protein is ATP synthase epsilon chain.